The sequence spans 336 residues: Glycerol-3-phosphate dehydrogenase [NAD(P)+] (336 aa).

4 residues coordinate NADPH: S11, W12, R32, and K109. K109, G140, and S142 together coordinate sn-glycerol 3-phosphate. A144 provides a ligand contact to NADPH. 5 residues coordinate sn-glycerol 3-phosphate: K195, D248, S258, R259, and N260. K195 serves as the catalytic Proton acceptor. Residue R259 participates in NADPH binding. NADPH is bound by residues V283 and E285.

It belongs to the NAD-dependent glycerol-3-phosphate dehydrogenase family.

The protein resides in the cytoplasm. The enzyme catalyses sn-glycerol 3-phosphate + NAD(+) = dihydroxyacetone phosphate + NADH + H(+). It catalyses the reaction sn-glycerol 3-phosphate + NADP(+) = dihydroxyacetone phosphate + NADPH + H(+). It functions in the pathway membrane lipid metabolism; glycerophospholipid metabolism. Catalyzes the reduction of the glycolytic intermediate dihydroxyacetone phosphate (DHAP) to sn-glycerol 3-phosphate (G3P), the key precursor for phospholipid synthesis. This Leuconostoc mesenteroides subsp. mesenteroides (strain ATCC 8293 / DSM 20343 / BCRC 11652 / CCM 1803 / JCM 6124 / NCDO 523 / NBRC 100496 / NCIMB 8023 / NCTC 12954 / NRRL B-1118 / 37Y) protein is Glycerol-3-phosphate dehydrogenase [NAD(P)+].